The sequence spans 538 residues: Calcyphosin-2 (538 aa).

Residues 134 to 146 (RNAENTKSNVTHK) are compositionally biased toward polar residues. The interval 134-154 (RNAENTKSNVTHKQSPRNKID) is disordered. 3 consecutive EF-hand domains span residues 426–461 (RILT…FHLE), 462–497 (VSEK…EMNE), and 498–533 (YRKS…KKHS). Residues aspartate 439, asparagine 443, aspartate 450, asparagine 477, asparagine 479, lysine 481, glutamate 486, aspartate 511, asparagine 513, serine 515, serine 517, and asparagine 522 each contribute to the Ca(2+) site.

As to expression, abundantly expressed in many tissues. Expressed in brain, colon, heart, kidney, liver, lung, liver, pancreas, placenta, skeletal muscle, testis and thymus. Highest expression in colon, testis, lung, placenta and brain.

In Homo sapiens (Human), this protein is Calcyphosin-2.